Consider the following 240-residue polypeptide: Biosynthetic peptidoglycan transglycosylase (240 aa).

Residues 15-35 traverse the membrane as a helical segment; sequence WMVYLGAVVAIAWLATQAFYF.

The protein belongs to the glycosyltransferase 51 family.

The protein resides in the cell inner membrane. It carries out the reaction [GlcNAc-(1-&gt;4)-Mur2Ac(oyl-L-Ala-gamma-D-Glu-L-Lys-D-Ala-D-Ala)](n)-di-trans,octa-cis-undecaprenyl diphosphate + beta-D-GlcNAc-(1-&gt;4)-Mur2Ac(oyl-L-Ala-gamma-D-Glu-L-Lys-D-Ala-D-Ala)-di-trans,octa-cis-undecaprenyl diphosphate = [GlcNAc-(1-&gt;4)-Mur2Ac(oyl-L-Ala-gamma-D-Glu-L-Lys-D-Ala-D-Ala)](n+1)-di-trans,octa-cis-undecaprenyl diphosphate + di-trans,octa-cis-undecaprenyl diphosphate + H(+). Its pathway is cell wall biogenesis; peptidoglycan biosynthesis. Its function is as follows. Peptidoglycan polymerase that catalyzes glycan chain elongation from lipid-linked precursors. The chain is Biosynthetic peptidoglycan transglycosylase from Paraburkholderia phytofirmans (strain DSM 17436 / LMG 22146 / PsJN) (Burkholderia phytofirmans).